Consider the following 1147-residue polypeptide: MDEELAFGQTVEVVDPDVRAHVYSLVTALGGFNGEDADKYVLGDDALACLRDIRRWLKLYDEKYNRMDVARCLGESNLVNGDLLPILSAWWHGNQGSRYMSRIALACKVELLVPLTWPLEVHAEMPANHLRHIPYLQHVQVLYKRGLLSRGHTPLLRAIIRIALPSMAVSRSERTTRDEGILKLMLYLLRNIAIISTNARLAAEGDEEETSRSATINAFQEQDAFALLLTMCSNVGDDFTMQDMVLLEIVFHLIKGVDVEKLFMSDAQRSAKRTDELSELLSKETSLRREYAKNAPTRHGRFGTMIWVKRDDAKMSTVSGQDVLKDSQATLYKMDQSKKWNKPKQRQKQELSVVNNDFDTPVHLNPIASKNLRMFVEEFLDSGFNPLFTHVRKAIEREADRVMDINSRQYFYAVAWFLEAERTRRVRQREKHSQSEKAAKEFEPDSFSLIASVLNQETFVFLNRSMQYSFDQKDWADLNAEMRCFTQILLTVQEMATSPLEEDQEIAENIQNRIFYEETTHDRILAIVRGYKDQGYGYLDACTELSHVFLRMLERYSKENTDMQIRSRRRAKRKKQLEQKGDENNGEEQDSEEEEMLEAERVSKERKFDFRRFSAKFCNQKCVDTFVSFARFYRELNSDQLKRLHRYFYRIAFKEEMSVLLFRVDIINLFYRMIKGPGGMDSTKPIFKEWEEFVRQLIRRMVKKIDQRPALITEMLFSKINSTMYYLEFGHEKQTISVTRRPPAELVVNPNDAETTEDKIKIVIGALVKDGKNRLVSWLSGVLDSAADEREAFEIQEAAEREENTRASRAPNPMIPVEPSDDDCKNEMFSNAKLRLLMALVKFERLGVEDIPGASWVVPAHLSSADIRDIKSTVDKCLADPFQGTFDREPQAMLQRKFQRENRGSFEPTQEVSFGNDSEGEDTPEFLFPPNPRSKSNALEELKKKRKKCKNDDGEKEPLDEQTIEERRRAREENARSRQAKIKSDLYVHASDEESDDEADEEFFRLEEKRRKEQSERIRQALLLGKVEELANKAGKKTQRKRPSDPQIAGDSESQNKRLRQDIPEDDDDLIMGGSEPDSPGLQTGDHDSDDDLRFEDDLAFRRNRESSAASDRNGPPGEAKEDEDTPVAASGRRRMRAGFVIDSDSE.

Disordered regions lie at residues 564–598 (QIRS…EMLE), 799–823 (AERE…SDDD), 898–1002 (FQRE…ADEE), and 1027–1147 (VEEL…SDSE). Positions 566–575 (RSRRRAKRKK) are enriched in basic residues. Residues 584–597 (NNGEEQDSEEEEML) show a composition bias toward acidic residues. The segment covering 907 to 916 (EPTQEVSFGN) has biased composition (polar residues). 3 stretches are compositionally biased toward basic and acidic residues: residues 950–992 (KNDD…HASD), 1054–1063 (SQNKRLRQDI), and 1096–1106 (EDDLAFRRNRE).

This sequence belongs to the timeless family. Component of the fork protection complex (FPC) consisting of tof1 and csm3.

It is found in the nucleus. In terms of biological role, forms a fork protection complex (FPC) with csm3 and which is required for chromosome segregation during meiosis and DNA damage repair. FPC coordinates leading and lagging strand synthesis and moves with the replication fork. FPC stabilizes replication forks in a configuration that is recognized by replication checkpoint sensors. This is Topoisomerase 1-associated factor 1 (tof1) from Aspergillus terreus (strain NIH 2624 / FGSC A1156).